A 464-amino-acid chain; its full sequence is Calcitonin gene-related peptide type 1 receptor (464 aa).

An N-terminal signal peptide occupies residues 1–23 (MMDKKCTLCFLFLLLLNMALIAA). The Extracellular segment spans residues 24 to 139 (ESEEGANQTD…STHEKVKTAL (116 aa)). 6 N-linked (GlcNAc...) asparagine glycosylation sites follow: Asn30, Asn66, Asn118, Asn123, Asn128, and Asn129. Disulfide bonds link Cys48-Cys74, Cys65-Cys105, and Cys88-Cys127. The helical transmembrane segment at 140–164 (NLFYLTIIGHGLSIASLIISLIIFF) threads the bilayer. The Cytoplasmic segment spans residues 165 to 175 (YFKSLSCQRIT). A helical transmembrane segment spans residues 176-198 (LHKNLFFSFVCNSIVTIIHLTAV). Over 199 to 209 (ANNQALVATNP) the chain is Extracellular. A helical membrane pass occupies residues 210 to 238 (VSCKVSQFIHLYLMGCNYFWMLCEGIYLH). Over 239-252 (TLIVVAVFAEKQHL) the chain is Cytoplasmic. A helical membrane pass occupies residues 253-273 (MWYYFLGWGFPLLPACIHAIA). At 274 to 289 (RSLYYNDNCWISSDTH) the chain is on the extracellular side. The segment at 288–289 (TH) is required for RAMP3 interaction. A helical membrane pass occupies residues 290–314 (LLYIIHGPICAALLVNLFFLLNIVR). Over 315–329 (VLITKLKVTHQAESN) the chain is Cytoplasmic. The helical transmembrane segment at 330-351 (LYMKAVRATLILVPLLGIEFVL) threads the bilayer. Residues 352–366 (FPWRPEGKVAEEVYD) are Extracellular-facing. Residues 367–387 (YVMHILMHYQGLLVSTIFCFF) traverse the membrane as a helical segment. Over 388-464 (NGEVQAILRR…KPEKMYDLVM (77 aa)) the chain is Cytoplasmic. Phosphoserine is present on residues Ser420 and Ser445.

Belongs to the G-protein coupled receptor 2 family. As to quaternary structure, heterodimer of CALCRL and RAMP1; the receptor complex functions as CGRP receptor. Heterodimer of CALCRL and RAMP2 or CALCRL and RAMP3; the complexes function as adrenomedullin receptor.

The protein localises to the cell membrane. Functionally, g protein-coupled receptor which specificity is determined by its interaction with receptor-activity-modifying proteins (RAMPs). Together with RAMP1, form the receptor complex for calcitonin-gene-related peptides CALCA/CGRP1 and CALCB/CGRP2. Together with RAMP2 or RAMP3, function as receptor complexes for adrenomedullin (ADM and ADM2). Ligand binding causes a conformation change that triggers signaling via guanine nucleotide-binding proteins (G proteins) and modulates the activity of downstream effectors. Activates cAMP-dependent pathway. The protein is Calcitonin gene-related peptide type 1 receptor of Rattus norvegicus (Rat).